The chain runs to 269 residues: Troponin I (269 aa).

The disordered stretch occupies residues 1-104 (MADDEKKAAA…AKKGFMTPER (104 aa)). N-acetylalanine is present on Ala-2. Over residues 9–50 (AAPAAAPAAAAKPAAPAAAPAANGKAAPAANGKAAPAAAAAP) the composition is skewed to low complexity. A compositionally biased stretch (basic and acidic residues) spans 56–91 (DPNDPKVKAEEAKKAKQAEIERKRAEVRKRMEEASK). The segment at 162–171 (ERMYICEGQK) is troponin T-interaction. Positions 189–202 (NAQVNDLRGKFVKP) are actin-binding. Lys-201 and Lys-205 each carry N6,N6,N6-trimethyllysine. Residues 239-269 (TLEEEEKEKKPDWSKGKPGDAKVKEEVEAEA) are disordered.

It belongs to the troponin I family. Binds to actin and tropomyosin. As to expression, all isoforms are expressed in somatic muscle. Isoforms containing exon 6a1 (isoforms 1 and 2) are expressed in all muscles but highest expression is in abdominal muscle and splanchnic muscle of the gut. Isoforms containing exon 6b1 (isoforms 5, 6, 9 and 10) are highly expressed in the tergal depressor of trochanter (TDT) muscle.

Troponin I is the ATPase inhibitory subunit of troponin in the thin filament regulatory complex. Involved in the development and maintenance of muscle and nervous system. May also be involved in the cytoskeletal apparatus. This is Troponin I (wupA) from Drosophila melanogaster (Fruit fly).